The primary structure comprises 203 residues: MKLRWFAFLVVILAGCSSKQDYRNPPWNAEVPVKRAMQWMPISEKAGAAWGVDPHLITAIIAIESGGNPNAVSKSNAIGLMQLKASTSGRDVYRRMGWRGEPTTSELKNPERNISMGAAYLSILENGPLAGIKDPQVMQYALVVSYANGAGALLRTFSSDRKKAIEKINDLDADEFFEHVVDNHPAPQAPRYIWKLQQALDAM.

An N-terminal signal peptide occupies residues 1–15 (MKLRWFAFLVVILAG). A lipid anchor (N-palmitoyl cysteine) is attached at Cys-16. Cys-16 carries S-diacylglycerol cysteine lipidation.

This sequence belongs to the transglycosylase Slt family.

It localises to the cell outer membrane. It carries out the reaction Endolytic cleavage of the (1-&gt;4)-beta-glycosidic linkage between N-acetylmuramic acid (MurNAc) and N-acetylglucosamine (GlcNAc) residues in peptidoglycan with concomitant formation of a 1,6-anhydrobond in the MurNAc residue.. Its function is as follows. Murein-degrading enzyme. May play a role in recycling of muropeptides during cell elongation and/or cell division. Preferentially cleaves at a distance of more than two disaccharide units from the ends of the glycan chain. This Salmonella paratyphi C (strain RKS4594) protein is Endo-type membrane-bound lytic murein transglycosylase A.